The primary structure comprises 131 residues: uncharacterized protein (131 aa).

The Response regulatory domain occupies 8–124 (DILVVDDDPD…ELIRLVQQYC (117 aa)). 4-aspartylphosphate is present on Asp-57.

This is an uncharacterized protein from Leptolyngbya boryana (Plectonema boryanum).